Here is a 197-residue protein sequence, read N- to C-terminus: Large ribosomal subunit protein bL25 (197 aa).

The protein belongs to the bacterial ribosomal protein bL25 family. CTC subfamily. In terms of assembly, part of the 50S ribosomal subunit; part of the 5S rRNA/L5/L18/L25 subcomplex. Contacts the 5S rRNA. Binds to the 5S rRNA independently of L5 and L18.

In terms of biological role, this is one of the proteins that binds to the 5S RNA in the ribosome where it forms part of the central protuberance. In Carboxydothermus hydrogenoformans (strain ATCC BAA-161 / DSM 6008 / Z-2901), this protein is Large ribosomal subunit protein bL25.